An 859-amino-acid chain; its full sequence is Linoleate 9S-lipoxygenase 1 (859 aa).

Positions 21–161 (VKGTVVLMKK…HYTTDRVFFS (141 aa)) constitute a PLAT domain. The region spanning 164-859 (TYLPHETPAT…GRGIPNSVSI (696 aa)) is the Lipoxygenase domain. The disordered stretch occupies residues 213-246 (KNPRPVLGGTQEYPYPRRGRTGRKPTKEDPQTES). Fe cation is bound by residues His-519, His-524, His-711, Asn-715, and Ile-859.

It belongs to the lipoxygenase family. In terms of assembly, monomer. The cofactor is Fe cation. As to expression, seedlings, roots, leaves, and flowers (at protein level). Expressed in guard cells.

The protein localises to the cytoplasm. It carries out the reaction (9Z,12Z)-octadecadienoate + O2 = (9S)-hydroperoxy-(10E,12Z)-octadecadienoate. The enzyme catalyses (9Z,12Z,15Z)-octadecatrienoate + O2 = (9S)-hydroperoxy-(10E,12Z,15Z)-octadecatrienoate. It functions in the pathway lipid metabolism; oxylipin biosynthesis. In terms of biological role, 9S-lipoxygenase that can use linoleic acid or linolenic acid as substrates. Plant lipoxygenases may be involved in a number of diverse aspects of plant physiology including growth and development, pest resistance, and senescence or responses to wounding. Catalyzes the hydroperoxidation of lipids containing a cis,cis-1,4-pentadiene structure. Function as regulators of root development by controlling the emergence of lateral roots. 9S-lypoxygenase-derived oxylipins may play an antagonistic role to ethylene signaling in the control of responses involving oxidative stress, lipid peroxidation and plant defense. LOX1-derived oxylipins may be involved in stress signaling from roots to shoots in response to cadmium exposure. 9S-lypoxygenase-derived oxylipins are engaged during infection to control the balance between salicylic acid (SA) and jasmonate (JA) signaling to facilitate infection by the fungal pathogen Fusarium graminearum. 9S-lypoxygenase-derived oxylipins activate brassinosteroid signaling to promote cell wall-based defense and limit pathogen infection. The LOX1-derived compound (9S)-hydroperoxy-(10E,12Z,15Z)-octadecatrienoate protects plant tissues against infection by the bacterial pathogen Pseudomonas syringae pv tomato DC3000. The LOX1-derived oxylipins are required to trigger stomatal closure in response to both infection by the bacterial pathogen Pseudomonas syringae pv tomato DC3000, and the pathogen-associated molecular pattern (PAMP) flagellin peptide flg22. Contributes to the oxidation of free fatty acids during seed aging. The sequence is that of Linoleate 9S-lipoxygenase 1 from Arabidopsis thaliana (Mouse-ear cress).